A 141-amino-acid chain; its full sequence is Transcription antitermination protein NusB (141 aa).

This sequence belongs to the NusB family.

Functionally, involved in transcription antitermination. Required for transcription of ribosomal RNA (rRNA) genes. Binds specifically to the boxA antiterminator sequence of the ribosomal RNA (rrn) operons. This is Transcription antitermination protein NusB from Neisseria meningitidis serogroup B (strain ATCC BAA-335 / MC58).